A 420-amino-acid chain; its full sequence is Glycogen synthase kinase-3 beta (420 aa).

Residues 1–22 show a composition bias toward polar residues; it reads MSGRPRTTSFAESCKPVQQPSA. The disordered stretch occupies residues 1–53; it reads MSGRPRTTSFAESCKPVQQPSAFGSMKVSRDKDGSKVTTVVATPGQGPDRPQE. A Phosphoserine; by PKB/AKT1, RPS6KA3 and SGK3 modification is found at Ser9. Cys14 carries the S-palmitoyl cysteine lipid modification. Residues 56–340 form the Protein kinase domain; that stretch reads YTDTKVIGNG…PLEACAHSFF (285 aa). ATP is bound by residues 62–70 and Lys85; that span reads IGNGSFGVV. Residue Asp181 is the Proton acceptor of the active site. At Tyr216 the chain carries Phosphotyrosine. A disordered region spans residues 385-420; that stretch reads QAAASPPANATAASDTNAGDRGQTNNAASASASNST. 2 stretches are compositionally biased toward low complexity: residues 386-401 and 409-420; these read AAAS…SDTN and NNAASASASNST. At Ser389 the chain carries Phosphoserine.

The protein belongs to the protein kinase superfamily. CMGC Ser/Thr protein kinase family. GSK-3 subfamily. In terms of assembly, monomer. Interacts with DAB2IP (via C2 domain); the interaction stimulates GSK3B kinase activation. Interacts (via C2 domain) with PPP2CA. Interacts with ARRB2, AXIN1, CABYR, DISC1, MMP2, MUC1, NIN, PRUNE1 and ZBED3. Interacts with AXIN1; the interaction mediates hyperphosphorylation of CTNNB1 leading to its ubiquitination and destruction. Interacts with and phosphorylates SNAI1. Interacts with DNM1L (via a C-terminal domain). Found in a complex composed of MACF1, APC, AXIN1, CTNNB1 and GSK3B. Interacts with SGK3. Interacts with the CLOCK-BMAL1 heterodimer. Interacts with the BMAL1. Interacts with CTNND2. The complex composed, at least, of APC, CTNNB1 and GSK3B interacts with JPT1; the interaction requires the inactive form of GSK3B (phosphorylated at 'Ser-9'). Forms a complex composed of PRKAR2A or PRKAR2B, GSK3B and GSKIP through GSKIP interaction; facilitates PKA-induced phosphorylation and regulates GSK3B activity. Interacts with GSKIP. Interacts with GID8. Interacts with PIWIL2. Interacts with LMBR1L. Interacts with DDX3X. Interacts with BIRC2. Interacts with TNFRSF10B; TNFRSF10B stimulation inhibits GSK3B kinase activity. Found in a complex with SLC39A6, SLC39A10 and with GSK3B that controls NCAM1 phosphorylation. Interacts with PKP3 (via ARM repeats); the interaction may be involved in PKP3 protein degradation. In terms of processing, phosphorylated by AKT1 and ILK1. Upon insulin-mediated signaling, the activated PKB/AKT1 and RPS6KA3 protein kinases phosphorylate and deactivate GSK3B, resulting in the dephosphorylation and activation of GYS1. Activated by phosphorylation at Tyr-216. Inactivated by phosphorylation at Ser-9. Phosphorylated in a circadian manner in the hippocampus. Post-translationally, mono-ADP-ribosylation by PARP10 negatively regulates kinase activity. Palmitoylated. Palmitoylation by ZDHHC4 prevents AKT1-mediated phosphorylation.

It is found in the cytoplasm. The protein resides in the nucleus. The protein localises to the membrane. Its subcellular location is the cell membrane. The enzyme catalyses L-seryl-[tau protein] + ATP = O-phospho-L-seryl-[tau protein] + ADP + H(+). It carries out the reaction L-threonyl-[tau protein] + ATP = O-phospho-L-threonyl-[tau protein] + ADP + H(+). The catalysed reaction is L-seryl-[protein] + ATP = O-phospho-L-seryl-[protein] + ADP + H(+). It catalyses the reaction L-threonyl-[protein] + ATP = O-phospho-L-threonyl-[protein] + ADP + H(+). With respect to regulation, activated by phosphorylation at Tyr-216. In response to insulin, inhibited by phosphorylation at Ser-9 by PKB/AKT1; phosphorylation at this site causes a conformational change, preventing access of substrates to the active site. Inhibited by IL22 treatment which also triggers phosphorylation at Ser-9, promoting inactivation. Inhibited by lithium. Constitutively active protein kinase that acts as a negative regulator in the hormonal control of glucose homeostasis, Wnt signaling and regulation of transcription factors and microtubules, by phosphorylating and inactivating glycogen synthase (GYS1 or GYS2), EIF2B, CTNNB1/beta-catenin, APC, AXIN1, DPYSL2/CRMP2, JUN, NFATC1/NFATC, MAPT/TAU and MACF1. Requires primed phosphorylation of the majority of its substrates. In skeletal muscle, contributes to insulin regulation of glycogen synthesis by phosphorylating and inhibiting GYS1 activity and hence glycogen synthesis. May also mediate the development of insulin resistance by regulating activation of transcription factors. Regulates protein synthesis by controlling the activity of initiation factor 2B (EIF2BE/EIF2B5) in the same manner as glycogen synthase. In Wnt signaling, GSK3B forms a multimeric complex with APC, AXIN1 and CTNNB1/beta-catenin and phosphorylates the N-terminus of CTNNB1 leading to its degradation mediated by ubiquitin/proteasomes. Phosphorylates JUN at sites proximal to its DNA-binding domain, thereby reducing its affinity for DNA. Phosphorylates NFATC1/NFATC on conserved serine residues promoting NFATC1/NFATC nuclear export, shutting off NFATC1/NFATC gene regulation, and thereby opposing the action of calcineurin. Phosphorylates MAPT/TAU on 'Thr-548', decreasing significantly MAPT/TAU ability to bind and stabilize microtubules. MAPT/TAU is the principal component of neurofibrillary tangles in Alzheimer disease. Plays an important role in ERBB2-dependent stabilization of microtubules at the cell cortex. Phosphorylates MACF1, inhibiting its binding to microtubules which is critical for its role in bulge stem cell migration and skin wound repair. Probably regulates NF-kappa-B (NFKB1) at the transcriptional level and is required for the NF-kappa-B-mediated anti-apoptotic response to TNF-alpha (TNF/TNFA). Negatively regulates replication in pancreatic beta-cells, resulting in apoptosis, loss of beta-cells and diabetes. Through phosphorylation of the anti-apoptotic protein MCL1, may control cell apoptosis in response to growth factors deprivation. Phosphorylates MUC1 in breast cancer cells, decreasing the interaction of MUC1 with CTNNB1/beta-catenin. Is necessary for the establishment of neuronal polarity and axon outgrowth. Phosphorylates MARK2, leading to inhibition of its activity. Phosphorylates SIK1 at 'Thr-182', leading to sustainment of its activity. Phosphorylates ZC3HAV1 which enhances its antiviral activity. Phosphorylates SNAI1, leading to its ubiquitination and proteasomal degradation. Phosphorylates SFPQ at 'Thr-687' upon T-cell activation. Phosphorylates NR1D1 st 'Ser-55' and 'Ser-59' and stabilizes it by protecting it from proteasomal degradation. Regulates the circadian clock via phosphorylation of the major clock components including BMAL1, CLOCK and PER2. Phosphorylates CLOCK AT 'Ser-427' and targets it for proteasomal degradation. Phosphorylates BMAL1 at 'Ser-17' and 'Ser-21' and primes it for ubiquitination and proteasomal degradation. Phosphorylates FBXL2 at 'Thr-404' and primes it for ubiquitination by the SCF(FBXO3) complex and proteasomal degradation. Phosphorylates OGT at 'Ser-3' or 'Ser-4' which positively regulates its activity. Phosphorylates MYCN in neuroblastoma cells which may promote its degradation. Regulates the circadian rhythmicity of hippocampal long-term potentiation and BMAL1 and PER2 expression. Acts as a regulator of autophagy by mediating phosphorylation of KAT5/TIP60 under starvation conditions, activating KAT5/TIP60 acetyltransferase activity and promoting acetylation of key autophagy regulators, such as ULK1 and RUBCNL/Pacer. Negatively regulates extrinsic apoptotic signaling pathway via death domain receptors. Promotes the formation of an anti-apoptotic complex, made of DDX3X, BRIC2 and GSK3B, at death receptors, including TNFRSF10B. The anti-apoptotic function is most effective with weak apoptotic signals and can be overcome by stronger stimulation. Phosphorylates E2F1, promoting the interaction between E2F1 and USP11, stabilizing E2F1 and promoting its activity. Phosphorylates mTORC2 complex component RICTOR at 'Ser-1235' in response to endoplasmic stress, inhibiting mTORC2. Phosphorylates FXR1, promoting FXR1 ubiquitination by the SCF(FBXO4) complex and FXR1 degradation by the proteasome. Phosphorylates interleukin-22 receptor subunit IL22RA1, preventing its proteasomal degradation. The chain is Glycogen synthase kinase-3 beta from Rattus norvegicus (Rat).